Here is an 88-residue protein sequence, read N- to C-terminus: Small ribosomal subunit protein bS20 (88 aa).

Residues 1–22 (MANIKSSKKRSIQSEKKRKYNS) show a composition bias toward basic residues. The disordered stretch occupies residues 1 to 26 (MANIKSSKKRSIQSEKKRKYNSSKKS).

This sequence belongs to the bacterial ribosomal protein bS20 family.

In terms of biological role, binds directly to 16S ribosomal RNA. This Wigglesworthia glossinidia brevipalpis protein is Small ribosomal subunit protein bS20.